Consider the following 144-residue polypeptide: Small ribosomal subunit protein eS12 (144 aa).

This sequence belongs to the eukaryotic ribosomal protein eS12 family.

The chain is Small ribosomal subunit protein eS12 (RPS12) from Trypanosoma brucei brucei.